The primary structure comprises 372 residues: MKSYIIVGAGILGASTAYHLAKTGARVTVIDRKEPGQATDAAAGIVCPWLSQRRNQDWYQLAKGGARYYKDLIHQLEKDGESDTGYKRVGAISIHTDASKLDKMEERAYKRREDAPEIGDITRLSASETKKLFPILADGYESVHISGAARVNGRALCRSLLSAAEKRGATVIKGNASLLFENGTVTGVQTDTKQFAADAVIVTAGAWANEILKPLGIHFQVSFQKAQIMHFEMTDADTGSWPVVMPPSDQYILSFDNGRIVAGATHENDAGLDDLRVTAGGQHEVLSKALAVAPGLADAAAVETRVGFRPFTPGFLPVVGAVPNVQGLYAANGLGASGLTMGPFLGAELAKLVLGKQTELDLSPYDPAGALA.

4–18 (YIIVGAGILGASTAY) is an FAD binding site.

This sequence belongs to the DadA oxidoreductase family. Requires FAD as cofactor.

This is an uncharacterized protein from Bacillus subtilis (strain 168).